The chain runs to 92 residues: Actobindin-A (92 aa).

2 disordered regions span residues 1–33 (MSAPNPLLAEINKGADLKHTETQDKSAPKIGSD) and 54–92 (LKHAETDDKSAPKINENTTIKPNNHSALLGEIKAKAADS). WH2 domains follow at residues 3–20 (APNPLLAEINKGADLKHT) and 40–57 (DHASLLSEVEQGAKLKHA). 2 stretches are compositionally biased toward basic and acidic residues: residues 13–33 (KGADLKHTETQDKSAPKIGSD) and 54–64 (LKHAETDDKSA). Over residues 68 to 79 (NENTTIKPNNHS) the composition is skewed to polar residues.

As to quaternary structure, monomer.

In terms of biological role, is able to bind two actin monomers at high concentrations of G-actin. Inhibits actin polymerization by sequestering G-actin and stabilizing actin dimers. In Dictyostelium discoideum (Social amoeba), this protein is Actobindin-A (abnA).